We begin with the raw amino-acid sequence, 595 residues long: Peptidyl-prolyl cis-trans isomerase CYP65 (595 aa).

Residues 35 to 108 (KSLPYYCCAL…GEYHCPVLNK (74 aa)) form the U-box domain. The region spanning 342-496 (KKGYVQFQTT…EEIKIIEASV (155 aa)) is the PPIase cyclophilin-type domain. Disordered stretches follow at residues 503-546 (ELDE…GGGG) and 576-595 (SKKRKTTASASTGFKDFSSW). Basic and acidic residues predominate over residues 510–525 (KEKAEKEKNEDKDIEK). The span at 582–595 (TASASTGFKDFSSW) shows a compositional bias: polar residues.

Belongs to the cyclophilin-type PPIase family. PPIL2 subfamily. In terms of tissue distribution, expressed in leaves, flower buds and stems. Lower levels of expression in roots.

The protein resides in the nucleus. The catalysed reaction is [protein]-peptidylproline (omega=180) = [protein]-peptidylproline (omega=0). It catalyses the reaction S-ubiquitinyl-[E2 ubiquitin-conjugating enzyme]-L-cysteine + [acceptor protein]-L-lysine = [E2 ubiquitin-conjugating enzyme]-L-cysteine + N(6)-ubiquitinyl-[acceptor protein]-L-lysine.. It functions in the pathway protein modification; protein ubiquitination. Functionally, may catalyze the cis-trans isomerization of proline imidic peptide bonds in oligopeptides thereby assisting the folding of proteins. May also function as a chaperone, playing a role in intracellular transport of proteins. May also have a protein ubiquitin ligase activity acting as an E3 ubiquitin protein ligase or as a ubiquitin-ubiquitin ligase promoting elongation of ubiquitin chains on proteins. This chain is Peptidyl-prolyl cis-trans isomerase CYP65 (CYP65), found in Arabidopsis thaliana (Mouse-ear cress).